The chain runs to 269 residues: MTHLERSRHQQFPFHLVAPSPWPIVVSFSLLSLALSLALAMHGYIGNMNLVWLALFVLTSSATLWFRDIIAEATYLGDHTIAVRKGINLGFLLFVVSEVLIFAGLFWAYFHSAMSPTIELGGVWPPVGIEAVQPTELPLLNTIILLASGATVTYSHHALIQGNRKDALSGLFITTWLIIIFVICQYIEYTNATFTISDGVYGSVFYAGTGLHFLHMVMLATMLAINYWRLRNYHLTSSHHVGYETTVIYLHVLDIIWLFLYIVFYWWGV.

The next 7 membrane-spanning stretches (helical) occupy residues 21–41 (PWPI…ALAM), 45–65 (IGNM…ATLW), 90–110 (GFLL…WAYF), 138–160 (PLLN…HALI), 167–187 (ALSG…CQYI), 205–225 (FYAG…MLAI), and 247–267 (VIYL…FYWW).

Belongs to the cytochrome c oxidase subunit 3 family. Component of the cytochrome c oxidase (complex IV, CIV), a multisubunit enzyme composed of a catalytic core of 3 subunits and several supernumerary subunits. The complex exists as a monomer or a dimer and forms supercomplexes (SCs) in the inner mitochondrial membrane with ubiquinol-cytochrome c oxidoreductase (cytochrome b-c1 complex, complex III, CIII).

The protein resides in the mitochondrion inner membrane. The enzyme catalyses 4 Fe(II)-[cytochrome c] + O2 + 8 H(+)(in) = 4 Fe(III)-[cytochrome c] + 2 H2O + 4 H(+)(out). Component of the cytochrome c oxidase, the last enzyme in the mitochondrial electron transport chain which drives oxidative phosphorylation. The respiratory chain contains 3 multisubunit complexes succinate dehydrogenase (complex II, CII), ubiquinol-cytochrome c oxidoreductase (cytochrome b-c1 complex, complex III, CIII) and cytochrome c oxidase (complex IV, CIV), that cooperate to transfer electrons derived from NADH and succinate to molecular oxygen, creating an electrochemical gradient over the inner membrane that drives transmembrane transport and the ATP synthase. Cytochrome c oxidase is the component of the respiratory chain that catalyzes the reduction of oxygen to water. Electrons originating from reduced cytochrome c in the intermembrane space (IMS) are transferred via the dinuclear copper A center (CU(A)) of subunit 2 and heme A of subunit 1 to the active site in subunit 1, a binuclear center (BNC) formed by heme A3 and copper B (CU(B)). The BNC reduces molecular oxygen to 2 water molecules using 4 electrons from cytochrome c in the IMS and 4 protons from the mitochondrial matrix. The protein is Cytochrome c oxidase subunit 3 (COX3) of Lachancea kluyveri (strain ATCC 58438 / CBS 3082 / BCRC 21498 / NBRC 1685 / JCM 7257 / NCYC 543 / NRRL Y-12651) (Yeast).